An 87-amino-acid chain; its full sequence is Small ribosomal subunit protein bS20 (87 aa).

A compositionally biased stretch (basic residues) spans methionine 1–arginine 10. The segment at methionine 1–alanine 27 is disordered.

Belongs to the bacterial ribosomal protein bS20 family.

In terms of biological role, binds directly to 16S ribosomal RNA. In Corynebacterium aurimucosum (strain ATCC 700975 / DSM 44827 / CIP 107346 / CN-1) (Corynebacterium nigricans), this protein is Small ribosomal subunit protein bS20.